A 129-amino-acid polypeptide reads, in one-letter code: Small ribosomal subunit protein uS11 (129 aa).

Belongs to the universal ribosomal protein uS11 family. As to quaternary structure, part of the 30S ribosomal subunit. Interacts with proteins S7 and S18. Binds to IF-3.

In terms of biological role, located on the platform of the 30S subunit, it bridges several disparate RNA helices of the 16S rRNA. Forms part of the Shine-Dalgarno cleft in the 70S ribosome. The polypeptide is Small ribosomal subunit protein uS11 (Haemophilus influenzae (strain ATCC 51907 / DSM 11121 / KW20 / Rd)).